The sequence spans 121 residues: Large ribosomal subunit protein uL18 (121 aa).

Belongs to the universal ribosomal protein uL18 family. As to quaternary structure, part of the 50S ribosomal subunit; part of the 5S rRNA/L5/L18/L25 subcomplex. Contacts the 5S and 23S rRNAs.

This is one of the proteins that bind and probably mediate the attachment of the 5S RNA into the large ribosomal subunit, where it forms part of the central protuberance. The polypeptide is Large ribosomal subunit protein uL18 (Bordetella avium (strain 197N)).